The sequence spans 411 residues: MPSVLWILFDGGGDRPTGGKTPFYVAFKPVIDYFTSLGSCGILDPISPGVRPGSDTAHLALFGYDPYRYYTGRGAFEALGAGVDLRPGDVAFRTNLATVDESGVVVDRRAGRYIAPEEARAVERLMASIGEEVGKAYGVEVLYRSTVEHRGVLVLRGPVSHKVSDTDPHKVGERIHMSEPLDGSKEAALTAQVVNEITRRFSAAAEGLEVNKARKASGRPPINAILLRGGGYMPQIEPVKERYKVRAAAIAGVALIRGVARAVGMDVYTAPGLGGTKDDVFDEAVKLAVELMSRYDVVFLHVKGTDSTAHDGDFRGKVSVIERLDKALSPYVDKIAGNYLVVTSDHATPVSIREHTGEPVPFLLYGPDVVTDDVGKFSELTCWRGALGRLRGIDVMPTLSSYLGLAEKFGE.

Belongs to the BPG-independent phosphoglycerate mutase family. A-PGAM subfamily.

The catalysed reaction is (2R)-2-phosphoglycerate = (2R)-3-phosphoglycerate. It functions in the pathway carbohydrate degradation; glycolysis; pyruvate from D-glyceraldehyde 3-phosphate: step 3/5. In terms of biological role, catalyzes the interconversion of 2-phosphoglycerate and 3-phosphoglycerate. In Pyrobaculum neutrophilum (strain DSM 2338 / JCM 9278 / NBRC 100436 / V24Sta) (Thermoproteus neutrophilus), this protein is 2,3-bisphosphoglycerate-independent phosphoglycerate mutase.